Consider the following 626-residue polypeptide: ATP-dependent RNA helicase dbp-8 (626 aa).

A compositionally biased stretch (low complexity) spans 1 to 25 (MPSATAAKAKKANANANLKSKVNKA). Residues 1-183 (MPSATAAKAK…ATPALPVPEP (183 aa)) form a disordered region. Over residues 40 to 98 (DESDFGSELDVEDESAASDEEDEDEDEDEHDLEEGVSDEGEGVSDEEEGVSDEDEDEEN) the composition is skewed to acidic residues. Basic and acidic residues predominate over residues 161 to 173 (KQAEAPKTEKTEE). Positions 195–223 (TTFDALNVRPWLVQSLANMAIKRPTGIQK) match the Q motif motif. Residues 226-406 (IPEILKGRDC…ERPPIPGRAP (181 aa)) enclose the Helicase ATP-binding domain. An ATP-binding site is contributed by 239–246 (SRTGSGKT). Positions 348–351 (DEAD) match the DEAD box motif. The Helicase C-terminal domain maps to 438–589 (YLHMFLLTPQ…GVNLETRVIR (152 aa)).

This sequence belongs to the DEAD box helicase family. DDX49/DBP8 subfamily.

Its subcellular location is the nucleus. It is found in the nucleolus. The enzyme catalyses ATP + H2O = ADP + phosphate + H(+). Its function is as follows. ATP-binding RNA helicase involved in 40S ribosomal subunit biogenesis and is required for the normal formation of 18S rRNAs through pre-rRNA processing at A0, A1 and A2 sites. Required for vegetative growth. The chain is ATP-dependent RNA helicase dbp-8 (dbp-8) from Neurospora crassa (strain ATCC 24698 / 74-OR23-1A / CBS 708.71 / DSM 1257 / FGSC 987).